A 556-amino-acid polypeptide reads, in one-letter code: Putative D-arabinono-1,4-lactone oxidase (556 aa).

An FAD-binding PCMH-type domain is found at 47–217; it reads FTSLPELYIQ…TEVTFKAVPA (171 aa). Position 84 is a pros-8alpha-FAD histidine (histidine 84).

It belongs to the oxygen-dependent FAD-linked oxidoreductase family. FAD serves as cofactor.

The protein resides in the mitochondrion membrane. It carries out the reaction D-arabinono-1,4-lactone + O2 = dehydro-D-arabinono-1,4-lactone + H2O2 + H(+). It participates in cofactor biosynthesis; D-erythroascorbate biosynthesis; dehydro-D-arabinono-1,4-lactone from D-arabinose: step 2/2. The polypeptide is Putative D-arabinono-1,4-lactone oxidase (alo-1) (Neurospora crassa (strain ATCC 24698 / 74-OR23-1A / CBS 708.71 / DSM 1257 / FGSC 987)).